The primary structure comprises 535 residues: CTP synthase (535 aa).

Residues 1 to 266 are amidoligase domain; sequence MKFVVITGGV…GDYICERLGL (266 aa). Ser-12 contributes to the CTP binding site. Ser-12 contributes to the UTP binding site. ATP-binding positions include 13–18 and Asp-70; that span reads GIGKGI. Mg(2+) contacts are provided by Asp-70 and Glu-140. CTP is bound by residues 147 to 149, 187 to 192, and Lys-223; these read DIE and KTKPTQ. UTP contacts are provided by residues 187 to 192 and Lys-223; that span reads KTKPTQ. One can recognise a Glutamine amidotransferase type-1 domain in the interval 291-535; sequence RIAVVGKYVD…IKAAAGQGPD (245 aa). L-glutamine is bound at residue Gly-355. Cys-382 functions as the Nucleophile; for glutamine hydrolysis in the catalytic mechanism. L-glutamine-binding positions include 383–386, Glu-406, and Arg-464; that span reads LGFQ. Residues His-508 and Glu-510 contribute to the active site.

This sequence belongs to the CTP synthase family. In terms of assembly, homotetramer.

It catalyses the reaction UTP + L-glutamine + ATP + H2O = CTP + L-glutamate + ADP + phosphate + 2 H(+). It carries out the reaction L-glutamine + H2O = L-glutamate + NH4(+). The catalysed reaction is UTP + NH4(+) + ATP = CTP + ADP + phosphate + 2 H(+). It participates in pyrimidine metabolism; CTP biosynthesis via de novo pathway; CTP from UDP: step 2/2. With respect to regulation, allosterically activated by GTP, when glutamine is the substrate; GTP has no effect on the reaction when ammonia is the substrate. The allosteric effector GTP functions by stabilizing the protein conformation that binds the tetrahedral intermediate(s) formed during glutamine hydrolysis. Inhibited by the product CTP, via allosteric rather than competitive inhibition. Catalyzes the ATP-dependent amination of UTP to CTP with either L-glutamine or ammonia as the source of nitrogen. Regulates intracellular CTP levels through interactions with the four ribonucleotide triphosphates. The sequence is that of CTP synthase from Methanopyrus kandleri (strain AV19 / DSM 6324 / JCM 9639 / NBRC 100938).